A 492-amino-acid polypeptide reads, in one-letter code: N-succinylglutamate 5-semialdehyde dehydrogenase (492 aa).

220-225 (GSASTG) provides a ligand contact to NAD(+). Catalysis depends on residues glutamate 243 and cysteine 277.

It belongs to the aldehyde dehydrogenase family. AstD subfamily.

The enzyme catalyses N-succinyl-L-glutamate 5-semialdehyde + NAD(+) + H2O = N-succinyl-L-glutamate + NADH + 2 H(+). It participates in amino-acid degradation; L-arginine degradation via AST pathway; L-glutamate and succinate from L-arginine: step 4/5. In terms of biological role, catalyzes the NAD-dependent reduction of succinylglutamate semialdehyde into succinylglutamate. The chain is N-succinylglutamate 5-semialdehyde dehydrogenase from Salmonella paratyphi C (strain RKS4594).